A 299-amino-acid chain; its full sequence is UDP-N-acetylenolpyruvoylglucosamine reductase (299 aa).

Residues 21 to 189 (RVGGPAQWLL…LSARFRLEPG (169 aa)) form the FAD-binding PCMH-type domain. Residue R168 is part of the active site. S219 acts as the Proton donor in catalysis. E289 is a catalytic residue.

It belongs to the MurB family. FAD is required as a cofactor.

The protein localises to the cytoplasm. It catalyses the reaction UDP-N-acetyl-alpha-D-muramate + NADP(+) = UDP-N-acetyl-3-O-(1-carboxyvinyl)-alpha-D-glucosamine + NADPH + H(+). It participates in cell wall biogenesis; peptidoglycan biosynthesis. Its function is as follows. Cell wall formation. The sequence is that of UDP-N-acetylenolpyruvoylglucosamine reductase from Parasynechococcus marenigrum (strain WH8102).